A 103-amino-acid chain; its full sequence is Non-histone chromosomal protein 6 (103 aa).

Disordered regions lie at residues 1 to 30 and 70 to 103; these read MPKAAAKSKTTGKVEKRRAKKDPNAPKRGL and KQRAPYEAKAAADKKRYEDEKQAYNAEADEEESS. A DNA-binding region (HMG box) is located at residues 26-94; the sequence is PKRGLSAYMF…RYEDEKQAYN (69 aa). Basic and acidic residues predominate over residues 70–91; sequence KQRAPYEAKAAADKKRYEDEKQ.

It belongs to the NHP6 family. In terms of assembly, weakly associates with the stable heterodimer of ctc-1/pob3 and ctc-2/spt16 to form the FACT complex.

The protein resides in the nucleus. Its subcellular location is the chromosome. DNA-binding protein that induces severe bending of DNA. Required for DNA-binding by the FACT complex, a general chromatin factor that acts to reorganize nucleosomes. The FACT complex is involved in multiple processes that require DNA as a template such as mRNA elongation, DNA replication and DNA repair. Also augments the fidelity of transcription by RNA polymerase III independently of any role in the FACT complex. This is Non-histone chromosomal protein 6 (nhp-1) from Neurospora crassa (strain ATCC 24698 / 74-OR23-1A / CBS 708.71 / DSM 1257 / FGSC 987).